The following is an 81-amino-acid chain: MKIGPPWLTRFERARIIGIRALQISLGAPVLIQVSEELSDPITIAEKELELGLLPIIVVRWTPEGKIQEIPIKYLKLRPQL.

This sequence belongs to the archaeal Rpo6/eukaryotic RPB6 RNA polymerase subunit family. In terms of assembly, part of the RNA polymerase complex.

Its subcellular location is the cytoplasm. The catalysed reaction is RNA(n) + a ribonucleoside 5'-triphosphate = RNA(n+1) + diphosphate. Its function is as follows. DNA-dependent RNA polymerase (RNAP) catalyzes the transcription of DNA into RNA using the four ribonucleoside triphosphates as substrates. This Thermofilum pendens (strain DSM 2475 / Hrk 5) protein is DNA-directed RNA polymerase subunit Rpo6.